The following is a 183-amino-acid chain: Adenine phosphoribosyltransferase (183 aa).

It belongs to the purine/pyrimidine phosphoribosyltransferase family. In terms of assembly, homodimer.

It is found in the cytoplasm. The enzyme catalyses AMP + diphosphate = 5-phospho-alpha-D-ribose 1-diphosphate + adenine. The protein operates within purine metabolism; AMP biosynthesis via salvage pathway; AMP from adenine: step 1/1. Catalyzes a salvage reaction resulting in the formation of AMP, that is energically less costly than de novo synthesis. The polypeptide is Adenine phosphoribosyltransferase (Salmonella typhi).